The chain runs to 509 residues: Glycogen synthase (509 aa).

An ADP-alpha-D-glucose-binding site is contributed by Lys47.

This sequence belongs to the glycosyltransferase 1 family. Bacterial/plant glycogen synthase subfamily.

It carries out the reaction [(1-&gt;4)-alpha-D-glucosyl](n) + ADP-alpha-D-glucose = [(1-&gt;4)-alpha-D-glucosyl](n+1) + ADP + H(+). It functions in the pathway glycan biosynthesis; glycogen biosynthesis. Its function is as follows. Synthesizes alpha-1,4-glucan chains using ADP-glucose. This Xanthomonas oryzae pv. oryzae (strain MAFF 311018) protein is Glycogen synthase.